The following is a 93-amino-acid chain: Pyrimidine/purine nucleoside phosphorylase (93 aa).

Belongs to the nucleoside phosphorylase PpnP family.

It catalyses the reaction a purine D-ribonucleoside + phosphate = a purine nucleobase + alpha-D-ribose 1-phosphate. The catalysed reaction is adenosine + phosphate = alpha-D-ribose 1-phosphate + adenine. The enzyme catalyses cytidine + phosphate = cytosine + alpha-D-ribose 1-phosphate. It carries out the reaction guanosine + phosphate = alpha-D-ribose 1-phosphate + guanine. It catalyses the reaction inosine + phosphate = alpha-D-ribose 1-phosphate + hypoxanthine. The catalysed reaction is thymidine + phosphate = 2-deoxy-alpha-D-ribose 1-phosphate + thymine. The enzyme catalyses uridine + phosphate = alpha-D-ribose 1-phosphate + uracil. It carries out the reaction xanthosine + phosphate = alpha-D-ribose 1-phosphate + xanthine. Functionally, catalyzes the phosphorolysis of diverse nucleosides, yielding D-ribose 1-phosphate and the respective free bases. Can use uridine, adenosine, guanosine, cytidine, thymidine, inosine and xanthosine as substrates. Also catalyzes the reverse reactions. This Hahella chejuensis (strain KCTC 2396) protein is Pyrimidine/purine nucleoside phosphorylase.